An 800-amino-acid polypeptide reads, in one-letter code: Integrin beta-5 (800 aa).

An N-terminal signal peptide occupies residues 1 to 24 (MPRAPALLFSCLLGLCALVPRLPG). Residues 25–722 (LNICTSGSAT…PECGTAPSAM (698 aa)) are Extracellular-facing. Residues 27–76 (ICTSGSATSCEECLLIHPKCAWCFKEDFGSLRSVTSRCDLKANLIRNGCG) enclose the PSI domain. 19 disulfide bridges follow: C28/C46, C36/C463, C39/C64, C49/C75, C202/C211, C259/C300, C401/C413, C433/C461, C465/C484, C476/C487, C489/C498, C500/C530, C513/C528, C522/C533, C535/C548, C550/C571, C555/C569, C563/C574, and C576/C585. The VWFA domain occupies 136–378 (YPVDLYYLMD…QLIINAYNSI (243 aa)). Mg(2+)-binding residues include S147 and S149. S149, D152, D153, and D184 together coordinate Ca(2+). The Ca(2+) site is built by N242, D244, P246, and E247. A Mg(2+)-binding site is contributed by E247. A glycan (N-linked (GlcNAc...) asparagine) is linked at N347. G362 is a binding site for Ca(2+). I-EGF domains are found at residues 465 to 499 (CSAG…TRCE), 500 to 549 (CQEG…SFCE), 550 to 586 (CDNF…DNCN), and 587 to 626 (CSTD…ETCE). The N-linked (GlcNAc...) asparagine glycan is linked to N479. N552 carries N-linked (GlcNAc...) asparagine glycosylation. N-linked (GlcNAc...) asparagine glycosylation is present at N586. Cystine bridges form between C587–C610, C594–C608, C602–C613, C615–C625, C628–C631, C635–C683, C641–C662, C644–C658, and C691–C715. Residues N655 and N706 are each glycosylated (N-linked (GlcNAc...) asparagine). The helical transmembrane segment at 723–743 (TILLAVVGSILLTGFALLVIW) threads the bilayer. The Cytoplasmic segment spans residues 744 to 800 (KLLVTIHDRREFAKFQSERSRARYEMASNPLYRKPISTHTVDFTFNKFNKSYNGTVD). Phosphoserine is present on S771.

This sequence belongs to the integrin beta chain family. Heterodimer of an alpha and a beta subunit. Beta-5 (ITGB5) associates with alpha-V (ITGAV). Interacts with MYO10. Interacts with DAB2. Integrin ITGAV:ITGB5 interacts with FBLN5 (via N-terminus). ITGAV:ITGB5 interacts with CCN3. Interacts with tensin TNS3; TNS3 also interacts with PEAK1, thus acting as an adapter molecule to bridge the association of PEAK1 with ITGB5.

The protein localises to the cell membrane. Integrin alpha-V/beta-5 (ITGAV:ITGB5) is a receptor for fibronectin. It recognizes the sequence R-G-D in its ligand. The chain is Integrin beta-5 (ITGB5) from Bos taurus (Bovine).